We begin with the raw amino-acid sequence, 507 residues long: Light-independent protochlorophyllide reductase subunit B (507 aa).

Asp36 serves as a coordination point for [4Fe-4S] cluster. Asp293 functions as the Proton donor in the catalytic mechanism. 428–429 (GM) contributes to the substrate binding site.

The protein belongs to the ChlB/BchB/BchZ family. In terms of assembly, protochlorophyllide reductase is composed of three subunits; ChlL, ChlN and ChlB. Forms a heterotetramer of two ChlB and two ChlN subunits. It depends on [4Fe-4S] cluster as a cofactor.

It localises to the plastid. Its subcellular location is the chloroplast. The enzyme catalyses chlorophyllide a + oxidized 2[4Fe-4S]-[ferredoxin] + 2 ADP + 2 phosphate = protochlorophyllide a + reduced 2[4Fe-4S]-[ferredoxin] + 2 ATP + 2 H2O. It functions in the pathway porphyrin-containing compound metabolism; chlorophyll biosynthesis (light-independent). Component of the dark-operative protochlorophyllide reductase (DPOR) that uses Mg-ATP and reduced ferredoxin to reduce ring D of protochlorophyllide (Pchlide) to form chlorophyllide a (Chlide). This reaction is light-independent. The NB-protein (ChlN-ChlB) is the catalytic component of the complex. This Porphyra purpurea (Red seaweed) protein is Light-independent protochlorophyllide reductase subunit B.